We begin with the raw amino-acid sequence, 466 residues long: Asparagine--tRNA ligase (466 aa).

The protein belongs to the class-II aminoacyl-tRNA synthetase family. Homodimer.

The protein resides in the cytoplasm. The catalysed reaction is tRNA(Asn) + L-asparagine + ATP = L-asparaginyl-tRNA(Asn) + AMP + diphosphate + H(+). This chain is Asparagine--tRNA ligase, found in Shewanella baltica (strain OS195).